The primary structure comprises 503 residues: Cytochrome c lysine N-methyltransferase 1 (503 aa).

The 225-residue stretch at 52 to 276 folds into the SET domain; the sequence is SKFELLRIPR…EEAQVFISYA (225 aa). Positions 190-291 are SET-like; the sequence is NYEKLISTVY…VHFEQIYGFL (102 aa).

Belongs to the class V-like SAM-binding methyltransferase superfamily.

The protein resides in the cytoplasm. It is found in the cytosol. It catalyses the reaction L-lysyl-[cytochrome c] + S-adenosyl-L-methionine = N(6)-methyl-L-lysyl-[cytochrome c] + S-adenosyl-L-homocysteine + H(+). Methyltransferase which mediates trimethylation of cytochrome c (CYC1). The protein is Cytochrome c lysine N-methyltransferase 1 (CTM1) of Kluyveromyces lactis (strain ATCC 8585 / CBS 2359 / DSM 70799 / NBRC 1267 / NRRL Y-1140 / WM37) (Yeast).